Reading from the N-terminus, the 404-residue chain is Calcium/calmodulin-dependent protein kinase cmkB (404 aa).

The region spanning 18–279 (YKTGKTLGAG…AHQALQHPWI (262 aa)) is the Protein kinase domain. Residues 24 to 32 (LGAGLYSVV) and K47 contribute to the ATP site. The Proton acceptor role is filled by D141. T179 carries the post-translational modification Phosphothreonine; by cmkC. The interval 279–322 (INPPYDTTDDLGSGEDLLPNIKKNFNARRTLHKAIDTVRAINKL) is autoinhibitory domain. Residues 301-323 (KNFNARRTLHKAIDTVRAINKLR) form a calmodulin-binding region. The interval 336–404 (VDPKPEHVNG…WSRTAPRSER (69 aa)) is disordered. 2 stretches are compositionally biased toward basic and acidic residues: residues 338–370 (PKPE…DSRS) and 379–389 (QIREQERKVKE).

The protein belongs to the protein kinase superfamily. CAMK Ser/Thr protein kinase family. CaMK subfamily. Phosphorylated by cmkC on Thr-179.

It carries out the reaction L-seryl-[protein] + ATP = O-phospho-L-seryl-[protein] + ADP + H(+). It catalyses the reaction L-threonyl-[protein] + ATP = O-phospho-L-threonyl-[protein] + ADP + H(+). Its activity is regulated as follows. Activated by Ca(2+)/calmodulin. Binding of calmodulin results in conformational change that relieves intrasteric autoinhibition and allows phosphorylation of Thr-179 within the activation loop by cmkC. In terms of biological role, calcium/calmodulin-dependent protein kinase that operates in the calcium-triggered CaMKK-CaMK1 signaling cascade. Required in G1-phase of the cell cycle for proper timing of the initial nuclear division after germination, but not for subsequent mitoses. Required for the normal temporal regulation of nimX activity. The chain is Calcium/calmodulin-dependent protein kinase cmkB from Emericella nidulans (Aspergillus nidulans).